The sequence spans 184 residues: MPQSKSRKIAILGYRSVGKSSLTIQFVEGQFVDSYDPTIENTFTKLITVNGQEYHLQLVDTAGQDEYSIFPQTYSIDINGYILVYSVTSIKSFEVIKVIHGKLLDMVGKVQIPIMLVGNKKDLHMERVISYEEGKALAESWNAAFLESSAKENQTAVDVFKRIILEAEKIDGAASQGKSSCSVM.

Lys-8 is covalently cross-linked (Glycyl lysine isopeptide (Lys-Gly) (interchain with G-Cter in ubiquitin)). Residues Ser-16, Val-17, Gly-18, Lys-19, Ser-20, Ser-21, Val-32, and Asp-33 each coordinate GDP. GTP contacts are provided by Ser-16, Val-17, Gly-18, Lys-19, Ser-20, Ser-21, Val-32, Asp-33, Tyr-35, Pro-37, Thr-38, Gly-63, Asn-119, Lys-120, and Asp-122. Mg(2+) is bound at residue Ser-20. Positions 35 to 43 (YDPTIENTF) match the Effector region motif. Position 38 (Thr-38) interacts with Mg(2+). Asn-119 lines the GDP pocket. Asp-122 serves as a coordination point for GDP. Ser-130 bears the Phosphoserine; by MAPKAPK5 mark. A GDP-binding site is contributed by Ala-150. Ala-150 serves as a coordination point for GTP. At Cys-181 the chain carries Cysteine methyl ester. A lipid anchor (S-farnesyl cysteine) is attached at Cys-181. Positions 182–184 (SVM) are cleaved as a propeptide — removed in mature form.

The protein belongs to the small GTPase superfamily. Rheb family. In terms of assembly, associates with the mTORC1 complex (MTOR, MLST8 and RPTOR) in a guanyl nucleotide-independent manner. Interacts with TSC2. Interacts with MCRS1; the interaction maintains RHEB at the lysosome in its active GTP-bound form and prevents its interaction with the mTORC1 complex inhibitor TSC2, ensuring activation of the mTORC1 complex by RHEB. Interacts (when prenylated) with PDE6D; this promotes release from membranes. In terms of processing, farnesylation is important for efficiently activating mTORC1-mediated signaling. Post-translationally, polyubiquitinated in response to amino acid, promoting its interaction with MTOR and mTORC1 activation. Deubiquitination by ATXN3 promotes recruitment of the TSC-TBC complex and RHEB inactivation by TSC2. Monoubiquitinated at Lys-8 by RNF152, promoting its association with the TSC-TBC complex. Deubiquitinated at Lys-8 by USP4, promoting mTORC1 activation. Phosphorylation by MAPKAPK5 impairs GTP-binding and inactivation.

Its subcellular location is the endomembrane system. The protein localises to the lysosome membrane. It localises to the golgi apparatus membrane. It is found in the endoplasmic reticulum membrane. The protein resides in the cytoplasm. Its subcellular location is the cytosol. The catalysed reaction is GTP + H2O = GDP + phosphate + H(+). Its activity is regulated as follows. Alternates between an inactive form bound to GDP and an active form bound to GTP. Inactivated by the TSC-TBC complex via the GTPase activating protein (GAP) domain of TSC2. Autoinhibited by Tyr-35, which constrains the active site conformation, restricting the access of the catalytic Asp-65 to the nucleotide-binding pocket. Small GTPase that acts as an allosteric activator of the canonical mTORC1 complex, an evolutionarily conserved central nutrient sensor that stimulates anabolic reactions and macromolecule biosynthesis to promote cellular biomass generation and growth. In response to nutrients, growth factors or amino acids, specifically activates the protein kinase activity of MTOR, the catalytic component of the mTORC1 complex: acts by causing a conformational change that allows the alignment of residues in the active site of MTOR, thereby enhancing the phosphorylation of ribosomal protein S6 kinase (RPS6KB1 and RPS6KB2) and EIF4EBP1 (4E-BP1). RHEB is also required for localization of the TSC-TBC complex to lysosomal membranes. In response to starvation, RHEB is inactivated by the TSC-TBC complex, preventing activation of mTORC1. Has low intrinsic GTPase activity. In Mus musculus (Mouse), this protein is GTP-binding protein Rheb.